The chain runs to 82 residues: Conotoxin Tx6.6 (82 aa).

A signal peptide spans M1–L19. A propeptide spanning residues V20 to K51 is cleaved from the precursor. Cystine bridges form between C53–C71, C60–C76, and C70–C81. An Alanine amide; partial modification is found at A82.

The protein belongs to the O1 superfamily. As to expression, expressed by the venom duct.

The protein resides in the secreted. In terms of biological role, omega-conotoxins act at presynaptic membranes, they bind and block voltage-gated calcium channels (Cav). The sequence is that of Conotoxin Tx6.6 from Conus textile (Cloth-of-gold cone).